Reading from the N-terminus, the 394-residue chain is Myb-related protein 2 (394 aa).

The HTH myb-type domain maps to 42-102 (TDAKPRLKWT…HLQKYRLSKN (61 aa)). Positions 73 to 98 (PKTIMKVMGIPGLTLYHLKSHLQKYR) form a DNA-binding region, H-T-H motif. The tract at residues 148–168 (GEALQMQIEVQRRLHEQLEVQ) is coiled coil. Residues 161 to 166 (LHEQLE) carry the LHEQLE motif. The disordered stretch occupies residues 338–363 (LHGHKSQHQQGNNEDHKLETRNRKGM). The segment covering 350-363 (NEDHKLETRNRKGM) has biased composition (basic and acidic residues).

This sequence belongs to the MYB-CC family. As to quaternary structure, isoform 1: Homodimer. Isoform 3: Does not form homodimer. As to expression, expressed in phloem and/or cambium.

Its subcellular location is the nucleus. Its function is as follows. Transcriptional activator that may activate the transcription of specific genes involved in nitrogen uptake or assimilation. Acts redundantly with MYR1 as a repressor of flowering and organ elongation under decreased light intensity. Represses gibberellic acid (GA)-dependent responses and affects levels of bioactive GA. The polypeptide is Myb-related protein 2 (Arabidopsis thaliana (Mouse-ear cress)).